Consider the following 108-residue polypeptide: Replication restart protein PriB (108 aa).

The 101-residue stretch at 8-108 (VDNRFSLIGK…LHAEQIEFIE (101 aa)) folds into the SSB domain.

This sequence belongs to the PriB family. In terms of assembly, homodimer. Interacts with PriA and DnaT. Component of the replication restart primosome. Primosome assembly occurs via a 'hand-off' mechanism. PriA binds to replication forks, subsequently PriB then DnaT bind; DnaT then displaces ssDNA to generate the helicase loading substrate.

In terms of biological role, involved in the restart of stalled replication forks, which reloads the replicative helicase on sites other than the origin of replication; the PriA-PriB pathway is the major replication restart pathway. During primosome assembly it facilitates complex formation between PriA and DnaT on DNA; stabilizes PriA on DNA. Stimulates the DNA unwinding activity of PriA helicase. In Histophilus somni (strain 2336) (Haemophilus somnus), this protein is Replication restart protein PriB.